A 289-amino-acid chain; its full sequence is MHKHHNGLKTAALFGVLWAVLLALGALIGAGTRSSAPIWIMALVGVGTTFYGYWNSDKIAIRSMQAFEVSEAQAPQLYQIVRELSARANQPMPRIYVSPTMNPNAFATGRNPQNAAVCCTEGILQLLDARELRGVLGHELMHVYNRDILTSSVAAAVAGVITSVGQMLLFFGGGDRRNANPLAMIAMALLAPFAASLIQMAISRTREYDADEDGSQLTGDPLALASALAKIERGVTMVPLPPDQRLVNASHLMIANPFRGGAMNKLFATHPPMRDRIARLERMAGRPLQ.

2 helical membrane-spanning segments follow: residues 11–31 (AALF…IGAG) and 36–54 (APIW…YGYW). H138 is a Zn(2+) binding site. E139 is a catalytic residue. A Zn(2+)-binding site is contributed by H142. The next 2 membrane-spanning stretches (helical) occupy residues 153-173 (VAAA…FFGG) and 182-202 (LAMI…QMAI). E207 serves as a coordination point for Zn(2+).

Belongs to the peptidase M48B family. The cofactor is Zn(2+).

Its subcellular location is the cell membrane. This is Protease HtpX homolog from Pseudarthrobacter chlorophenolicus (strain ATCC 700700 / DSM 12829 / CIP 107037 / JCM 12360 / KCTC 9906 / NCIMB 13794 / A6) (Arthrobacter chlorophenolicus).